The sequence spans 167 residues: 6,7-dimethyl-8-ribityllumazine synthase (167 aa).

Residues Phe24, 58 to 60, and 82 to 84 each bind 5-amino-6-(D-ribitylamino)uracil; these read ALE and AVV. 87–88 contributes to the (2S)-2-hydroxy-3-oxobutyl phosphate binding site; it reads ET. The active-site Proton donor is the His90. Asn115 is a binding site for 5-amino-6-(D-ribitylamino)uracil. A (2S)-2-hydroxy-3-oxobutyl phosphate-binding site is contributed by Arg129.

Belongs to the DMRL synthase family.

It catalyses the reaction (2S)-2-hydroxy-3-oxobutyl phosphate + 5-amino-6-(D-ribitylamino)uracil = 6,7-dimethyl-8-(1-D-ribityl)lumazine + phosphate + 2 H2O + H(+). The protein operates within cofactor biosynthesis; riboflavin biosynthesis; riboflavin from 2-hydroxy-3-oxobutyl phosphate and 5-amino-6-(D-ribitylamino)uracil: step 1/2. In terms of biological role, catalyzes the formation of 6,7-dimethyl-8-ribityllumazine by condensation of 5-amino-6-(D-ribitylamino)uracil with 3,4-dihydroxy-2-butanone 4-phosphate. This is the penultimate step in the biosynthesis of riboflavin. The polypeptide is 6,7-dimethyl-8-ribityllumazine synthase (Cupriavidus pinatubonensis (strain JMP 134 / LMG 1197) (Cupriavidus necator (strain JMP 134))).